The primary structure comprises 538 residues: Succinyl-CoA:acetate CoA-transferase (538 aa).

Residue 305 to 309 participates in CoA binding; the sequence is GVGSV. Glutamate 330 acts as the 5-glutamyl coenzyme A thioester intermediate in catalysis. 2 residues coordinate CoA: asparagine 420 and glycine 424.

Belongs to the acetyl-CoA hydrolase/transferase family.

The enzyme catalyses succinyl-CoA + acetate = succinate + acetyl-CoA. Functionally, forms succinyl-CoA from succinate and acetyl-CoA. This Clostridium kluyveri (strain ATCC 8527 / DSM 555 / NBRC 12016 / NCIMB 10680 / K1) protein is Succinyl-CoA:acetate CoA-transferase.